The sequence spans 112 residues: Cortistatin (112 aa).

Positions 1–27 (MGGCSTRGKRPSALSLLLLLLLSGIAA) are cleaved as a signal peptide. Residues 28 to 81 (SALPLESGPTGQDSVQDATGGRRTGLLTFLAWWHEWASQDSSSTAFEGGTPELS) constitute a propeptide that is removed on maturation. The segment at 66 to 101 (QDSSSTAFEGGTPELSKRQERPPLQQPPHRDKKPCK) is disordered. C100 and C111 are disulfide-bonded.

The protein belongs to the somatostatin family. As to expression, interneurons in the cerebral cortex and hippocampus.

It is found in the secreted. Its function is as follows. Neuropeptide with neuronal depressant and sleep-modulating properties. The polypeptide is Cortistatin (Cort) (Rattus norvegicus (Rat)).